The following is a 755-amino-acid chain: Xaa-Pro dipeptidyl-peptidase (755 aa).

Catalysis depends on charge relay system residues serine 348, aspartate 468, and histidine 498.

The protein belongs to the peptidase S15 family. As to quaternary structure, homodimer.

It is found in the cytoplasm. The enzyme catalyses Hydrolyzes Xaa-Pro-|- bonds to release unblocked, N-terminal dipeptides from substrates including Ala-Pro-|-p-nitroanilide and (sequentially) Tyr-Pro-|-Phe-Pro-|-Gly-Pro-|-Ile.. Removes N-terminal dipeptides sequentially from polypeptides having unsubstituted N-termini provided that the penultimate residue is proline. This chain is Xaa-Pro dipeptidyl-peptidase, found in Streptococcus thermophilus.